The following is a 227-amino-acid chain: Lipoprotein-releasing system ATP-binding protein LolD (227 aa).

One can recognise an ABC transporter domain in the interval 6 to 227 (LTSQKLYKSY…LHEGSLYARE (222 aa)). Position 42–49 (42–49 (GPSGSGKS)) interacts with ATP.

The protein belongs to the ABC transporter superfamily. Lipoprotein translocase (TC 3.A.1.125) family. In terms of assembly, the complex is composed of two ATP-binding proteins (LolD) and two transmembrane proteins (LolC and LolE).

The protein resides in the cell inner membrane. Its function is as follows. Part of the ABC transporter complex LolCDE involved in the translocation of mature outer membrane-directed lipoproteins, from the inner membrane to the periplasmic chaperone, LolA. Responsible for the formation of the LolA-lipoprotein complex in an ATP-dependent manner. The chain is Lipoprotein-releasing system ATP-binding protein LolD from Legionella pneumophila (strain Lens).